A 404-amino-acid polypeptide reads, in one-letter code: uncharacterized protein (404 aa).

The span at 262-278 shows a compositional bias: polar residues; it reads VSTGDTSPYGTEDSSPA. 2 disordered regions span residues 262 to 307 and 320 to 340; these read VSTG…SPSL and KKSHSANDSEEFFREDDGGAD. Phosphoserine occurs at positions 268, 276, and 279. Thr290 and Thr293 each carry phosphothreonine. A phosphoserine mark is found at Ser304, Ser306, Ser324, Ser358, and Ser362. Residues 320 to 336 show a composition bias toward basic and acidic residues; the sequence is KKSHSANDSEEFFREDD.

This is an uncharacterized protein from Rattus norvegicus (Rat).